A 387-amino-acid chain; its full sequence is Protein MGF 360-4L (387 aa).

Belongs to the asfivirus MGF 360 family.

Plays a role in virus cell tropism, and may be required for efficient virus replication in macrophages. This is Protein MGF 360-4L from Ornithodoros (relapsing fever ticks).